A 317-amino-acid polypeptide reads, in one-letter code: Protein IRX15-LIKE (317 aa).

Residues 27–47 traverse the membrane as a helical segment; it reads LWLLAFVSFFTIAFLLTLLYT.

As to expression, expressed in roots, rosette leaves, stems and siliques. Expressed in the xylem.

The protein resides in the golgi apparatus membrane. Its function is as follows. Required for xylan biosynthesis, but not directly involved in catalyzing the addition of sugars to the growing polymer. The sequence is that of Protein IRX15-LIKE (IRX15-L) from Arabidopsis thaliana (Mouse-ear cress).